A 317-amino-acid polypeptide reads, in one-letter code: Methionyl-tRNA formyltransferase (317 aa).

110–113 contributes to the (6S)-5,6,7,8-tetrahydrofolate binding site; it reads SLLP.

This sequence belongs to the Fmt family.

The catalysed reaction is L-methionyl-tRNA(fMet) + (6R)-10-formyltetrahydrofolate = N-formyl-L-methionyl-tRNA(fMet) + (6S)-5,6,7,8-tetrahydrofolate + H(+). Functionally, attaches a formyl group to the free amino group of methionyl-tRNA(fMet). The formyl group appears to play a dual role in the initiator identity of N-formylmethionyl-tRNA by promoting its recognition by IF2 and preventing the misappropriation of this tRNA by the elongation apparatus. In Bacillus subtilis (strain 168), this protein is Methionyl-tRNA formyltransferase.